The sequence spans 110 residues: uncharacterized protein (110 aa).

The N-terminal stretch at 1–19 is a signal peptide; it reads MKYLVGCLCLAAICLSAGA. The N-linked (GlcNAc...) asparagine glycan is linked to asparagine 101.

As to expression, component of the acid-soluble and acid-insoluble organic matrix of prismatic shell layers (at protein level).

Its subcellular location is the secreted. This is an uncharacterized protein from Haliotis asinina (Donkey's ear abalone).